A 492-amino-acid polypeptide reads, in one-letter code: Ketol-acid reductoisomerase (NADP(+)) (492 aa).

Residues 15–208 (AQLGKCRFMA…GGHRAGVLES (194 aa)) form the KARI N-terminal Rossmann domain. Residues 45 to 48 (CGAQ), R68, R76, S78, and 108 to 110 (DKQ) contribute to the NADP(+) site. H132 is an active-site residue. G158 is a binding site for NADP(+). KARI C-terminal knotted domains follow at residues 209–344 (SFVA…NAPQ) and 345–485 (FEGK…MTDM). Mg(2+) is bound by residues D217, E221, E389, and E393. S414 lines the substrate pocket.

The protein belongs to the ketol-acid reductoisomerase family. It depends on Mg(2+) as a cofactor.

It catalyses the reaction (2R)-2,3-dihydroxy-3-methylbutanoate + NADP(+) = (2S)-2-acetolactate + NADPH + H(+). It carries out the reaction (2R,3R)-2,3-dihydroxy-3-methylpentanoate + NADP(+) = (S)-2-ethyl-2-hydroxy-3-oxobutanoate + NADPH + H(+). It participates in amino-acid biosynthesis; L-isoleucine biosynthesis; L-isoleucine from 2-oxobutanoate: step 2/4. Its pathway is amino-acid biosynthesis; L-valine biosynthesis; L-valine from pyruvate: step 2/4. Its function is as follows. Involved in the biosynthesis of branched-chain amino acids (BCAA). Catalyzes an alkyl-migration followed by a ketol-acid reduction of (S)-2-acetolactate (S2AL) to yield (R)-2,3-dihydroxy-isovalerate. In the isomerase reaction, S2AL is rearranged via a Mg-dependent methyl migration to produce 3-hydroxy-3-methyl-2-ketobutyrate (HMKB). In the reductase reaction, this 2-ketoacid undergoes a metal-dependent reduction by NADPH to yield (R)-2,3-dihydroxy-isovalerate. The chain is Ketol-acid reductoisomerase (NADP(+)) from Yersinia enterocolitica serotype O:8 / biotype 1B (strain NCTC 13174 / 8081).